Reading from the N-terminus, the 151-residue chain is NADH dehydrogenase [ubiquinone] 1 beta subcomplex subunit 11, mitochondrial (151 aa).

Residues 1 to 29 (MAARLLSLCARRLSVTAAVRGLPAAGVRW) constitute a mitochondrion transit peptide. The disordered stretch occupies residues 39 to 62 (STVERKRQRQPTMHWQEDPESEDE). A helical transmembrane segment spans residues 87 to 107 (VVFFFGFSIVLVLGTTFMAYL).

The protein belongs to the complex I NDUFB11 subunit family. As to quaternary structure, complex I is composed of 45 different subunits. Interacts with BCAP31.

The protein resides in the mitochondrion inner membrane. In terms of biological role, accessory subunit of the mitochondrial membrane respiratory chain NADH dehydrogenase (Complex I), that is believed not to be involved in catalysis. Complex I functions in the transfer of electrons from NADH to the respiratory chain. The immediate electron acceptor for the enzyme is believed to be ubiquinone. The polypeptide is NADH dehydrogenase [ubiquinone] 1 beta subcomplex subunit 11, mitochondrial (NDUFB11) (Cricetulus griseus (Chinese hamster)).